Here is a 438-residue protein sequence, read N- to C-terminus: GDP-mannose 6-dehydrogenase (438 aa).

NAD(+)-binding residues include tyrosine 10, valine 11, aspartate 30, lysine 35, threonine 86, and threonine 124. Residues glutamate 161, lysine 210, asparagine 214, histidine 217, asparagine 225, tyrosine 256, tyrosine 257, arginine 259, phenylalanine 262, and glycine 265 each coordinate GDP-alpha-D-mannuronate. Cysteine 268 is an active-site residue. An NAD(+)-binding site is contributed by lysine 271. Lysine 324 contacts GDP-alpha-D-mannuronate. Arginine 331 contacts NAD(+).

This sequence belongs to the UDP-glucose/GDP-mannose dehydrogenase family.

The catalysed reaction is GDP-alpha-D-mannose + 2 NAD(+) + H2O = GDP-alpha-D-mannuronate + 2 NADH + 3 H(+). Its pathway is glycan biosynthesis; alginate biosynthesis. Its function is as follows. Catalyzes the oxidation of guanosine diphospho-D-mannose (GDP-D-mannose) to GDP-D-mannuronic acid, a precursor for alginate polymerization. The alginate layer causes a mucoid phenotype and provides a protective barrier against host immune defenses and antibiotics. This Pseudomonas syringae pv. syringae protein is GDP-mannose 6-dehydrogenase (algD).